The chain runs to 90 residues: Large ribosomal subunit protein bL27 (90 aa).

The disordered stretch occupies residues 1 to 21; it reads MAHTKAGGTTRNSRDSAGRRL.

Belongs to the bacterial ribosomal protein bL27 family.

In Metamycoplasma arthritidis (strain 158L3-1) (Mycoplasma arthritidis), this protein is Large ribosomal subunit protein bL27.